The primary structure comprises 945 residues: Glutamyl aminopeptidase (945 aa).

At 1–18 (MNFAEEEPSKKYCIKGKH) the chain is on the cytoplasmic side. The helical; Signal-anchor for type II membrane protein transmembrane segment at 19–39 (VAIICATVVAVGLIVGLSVGL) threads the bilayer. The Extracellular segment spans residues 40–945 (TRSCEPGTTP…SISEWFTSMP (906 aa)). Residues 45 to 77 (PGTTPAPSNPPPHTSTALPPQDQNVCPDSDDES) are disordered. N-linked (GlcNAc...) asparagine glycans are attached at residues asparagine 116 and asparagine 189. Position 215 (glutamate 215) interacts with substrate. Asparagine 236 and asparagine 316 each carry an N-linked (GlcNAc...) asparagine glycan. Position 349–353 (349–353 (GAMEN)) interacts with substrate. Histidine 385 provides a ligand contact to Zn(2+). Glutamate 386 serves as the catalytic Proton acceptor. Zn(2+)-binding residues include histidine 389 and glutamate 408. N-linked (GlcNAc...) asparagine glycosylation is found at asparagine 546, asparagine 584, asparagine 601, asparagine 640, asparagine 669, asparagine 754, asparagine 766, and asparagine 792. Arginine 878 serves as a coordination point for substrate.

Belongs to the peptidase M1 family. In terms of assembly, homodimer; disulfide-linked. The cofactor is Zn(2+). Highest expression in kidney proximal tubules and ileum enterocytes. High expression also detected in liver and pituitary. Lower levels in heart, adrenal gland and brain. Not detected in aorta, lung or spleen. In heart, higher levels in ventricle than in atrium. Also expressed in glomerular mesangial cells.

It is found in the cell membrane. It carries out the reaction Release of N-terminal glutamate (and to a lesser extent aspartate) from a peptide.. Its activity is regulated as follows. Substrate specificity is modulated by calcium which enhances the enzymatic activity for cleavage of acidic residues while reducing its activity with basic residues. Inhibited by aminopeptidase inhibitors amastatin and bestatin. Functionally, regulates central hypertension through its calcium-modulated preference to cleave N-terminal acidic residues from peptides such as angiotensin II. The protein is Glutamyl aminopeptidase (Enpep) of Rattus norvegicus (Rat).